Reading from the N-terminus, the 122-residue chain is Large ribosomal subunit protein uL18 (122 aa).

Residues Met1–Asn20 are compositionally biased toward basic residues. A disordered region spans residues Met1 to Ile22.

This sequence belongs to the universal ribosomal protein uL18 family. In terms of assembly, part of the 50S ribosomal subunit; part of the 5S rRNA/L5/L18/L25 subcomplex. Contacts the 5S and 23S rRNAs.

In terms of biological role, this is one of the proteins that bind and probably mediate the attachment of the 5S RNA into the large ribosomal subunit, where it forms part of the central protuberance. The polypeptide is Large ribosomal subunit protein uL18 (Alkaliphilus metalliredigens (strain QYMF)).